The sequence spans 850 residues: Probable beta-glucosidase J (850 aa).

2 N-linked (GlcNAc...) asparagine glycosylation sites follow: Asn-43 and Asn-52. Asp-254 is a catalytic residue. The 161-residue stretch at 423–583 folds into the PA14 domain; that stretch reads TGERGYTFRV…DAETAIKQAV (161 aa). An N-linked (GlcNAc...) asparagine glycan is attached at Asn-508.

The protein belongs to the glycosyl hydrolase 3 family.

The protein localises to the secreted. It carries out the reaction Hydrolysis of terminal, non-reducing beta-D-glucosyl residues with release of beta-D-glucose.. Its pathway is glycan metabolism; cellulose degradation. Its function is as follows. Beta-glucosidases are one of a number of cellulolytic enzymes involved in the degradation of cellulosic biomass. Catalyzes the last step releasing glucose from the inhibitory cellobiose. The sequence is that of Probable beta-glucosidase J (bglJ) from Emericella nidulans (strain FGSC A4 / ATCC 38163 / CBS 112.46 / NRRL 194 / M139) (Aspergillus nidulans).